The sequence spans 275 residues: Transmembrane protein 106B (275 aa).

A disordered region spans residues 1–24 (MGKSLSHLPLHSNKEDGYDGVTST). The N-myristoyl glycine moiety is linked to residue Gly-2. The Cytoplasmic portion of the chain corresponds to 2-97 (GKSLSHLPLH…QRLRPRRTKL (96 aa)). The residue at position 34 (Ser-34) is a Phosphoserine. Residues 98–118 (YVMASVFVCLLLSGLAVFFLF) traverse the membrane as a helical segment. Topologically, residues 119–275 (PRSIDVKYIG…EYLNVLQPQQ (157 aa)) are lumenal. 4 N-linked (GlcNAc...) asparagine glycosylation sites follow: Asn-146, Asn-152, Asn-165, and Asn-184. Cys-215 and Cys-254 are joined by a disulfide. Residue Asn-257 is glycosylated (N-linked (GlcNAc...) asparagine).

The protein belongs to the TMEM106 family. Can form homomers. Interacts (via N-terminus) with MAP6 (via C-terminus). Interacts (via C-terminus) with the vacuolar-type ATPase subunit ATP6AP1. Interacts (via N-terminus) with AP2M1 and CLTC. Interacts with TMEM106C. As to expression, expressed in cortical neurons (at protein level).

It is found in the late endosome membrane. It localises to the lysosome membrane. Its subcellular location is the cell membrane. Its function is as follows. Involved in dendrite morphogenesis and maintenance by regulating lysosomal trafficking. May act as a molecular brake for retrograde transport of late endosomes/lysosomes, possibly via its interaction with MAP6. In neurons, may also play a role in the regulation of lysosomal size and responsiveness to stress. Required for proper lysosomal acidification. In terms of biological role, in neurons, involved in the transport of late endosomes/lysosomes. May be involved in dendrite morphogenesis and maintenance by regulating lysosomal trafficking. May act as a molecular brake for retrograde transport of late endosomes/lysosomes, possibly via its interaction with MAP6. In motoneurons, may mediate the axonal transport of lysosomes and axonal sorting at the initial segment. It remains unclear whether TMEM106B affects the transport of moving lysosomes in the anterograde or retrograde direction in neurites and whether it is particularly important in the sorting of lysosomes in axons or in dendrites. In neurons, may also play a role in the regulation of lysosomal size and responsiveness to stress. Required for proper lysosomal acidification. This Rattus norvegicus (Rat) protein is Transmembrane protein 106B (Tmem106b).